A 347-amino-acid chain; its full sequence is 5-deoxyribose 1-phosphate isomerase (347 aa).

Substrate is bound by residues 48-50 (RGA), Arg-91, and Gln-198. Asp-239 acts as the Proton donor in catalysis. 249–250 (NK) provides a ligand contact to substrate.

The protein belongs to the EIF-2B alpha/beta/delta subunits family. DrdI subfamily.

The catalysed reaction is 5-deoxy-alpha-D-ribose 1-phosphate = 5-deoxy-D-ribulose 1-phosphate. The protein operates within carbohydrate degradation. In terms of biological role, catalyzes the isomerization of 5-deoxy-alpha-D-ribose 1-phosphate to 5-deoxy-D-ribulose 1-phosphate, as part of a 5-deoxyribose salvage pathway that recycles this toxic radical SAM enzyme by-product to mainstream metabolites. This Petrotoga mobilis (strain DSM 10674 / SJ95) protein is 5-deoxyribose 1-phosphate isomerase.